Here is a 93-residue protein sequence, read N- to C-terminus: Bombyxin B-11 (93 aa).

The signal sequence occupies residues 1–22; it reads MMKTAVMFILVVVISLTYSSEE. Intrachain disulfides connect Cys30-Cys75, Cys42-Cys92, and Cys74-Cys79. A propeptide spans 49-64 (bombyxin B-11 C peptide); sequence GGAQYAPYWQETYLRS.

This sequence belongs to the insulin family. As to quaternary structure, heterodimer of a B chain and an A chain linked by two disulfide bonds.

Its subcellular location is the secreted. In terms of biological role, brain peptide responsible for activation of prothoracic glands to produce ecdysone in insects. This is Bombyxin B-11 (BBXB11) from Bombyx mori (Silk moth).